The chain runs to 187 residues: MKAFLVALVVAIELTLVFAGCPTIVSKNRWGGQQASQVQYTVKPLKYVIIHHTSTPTCTNEDDCSRRLVNIQDYHMNRLDFDDIGYNFMIGGDGQIYEGAGWHKEGAHARGWNSKSLGIGFIGDFQTNLPSSKQLDAGKKFLECAVEKGEIEDTYKLIGARTVRPTDSPGTLLFREIQTWRGFTRNP.

The first 19 residues, 1–19 (MKAFLVALVVAIELTLVFA), serve as a signal peptide directing secretion. 2 disulfide bridges follow: C21–C144 and C58–C64. Residues 43–170 (KPLKYVIIHH…RTVRPTDSPG (128 aa)) enclose the N-acetylmuramoyl-L-alanine amidase domain.

This sequence belongs to the N-acetylmuramoyl-L-alanine amidase 2 family. In terms of tissue distribution, localizes to plasma (at protein level).

Its subcellular location is the secreted. Its function is as follows. Peptidoglycan-recognition protein probably involved in innate immunity by binding to peptidoglycans (PGN) of bacteria and activating the prophenoloxidase (proPO) cascade immune response. Binds to 1,3-beta-D-glucan and PGN. The chain is Peptidoglycan-recognition protein 2 (PGRP-2) from Holotrichia diomphalia (Korean black chafer).